The following is a 715-amino-acid chain: Probable ubiquitin thioesterase DG1039 (715 aa).

A coiled-coil region spans residues 86–302; sequence KSRNEIKRKA…NNQTDDKLDN (217 aa). Residues 287–302 are compositionally biased toward basic and acidic residues; sequence NKKLENNNQTDDKLDN. Disordered regions lie at residues 287 to 367, 398 to 450, and 502 to 527; these read NKKL…YNST, QYKQ…QQQY, and LAQSPAVNTPSITPTTNKPNIDSSEA. The segment covering 339–349 has biased composition (polar residues); that stretch reads TTAQLPLSITQ. The segment covering 398 to 409 has biased composition (low complexity); it reads QYKQQQQQQPIQ. Polar residues-rich tracts occupy residues 410–427 and 502–525; these read SPTNNINRPNIPQYNNYN and LAQSPAVNTPSITPTTNKPNIDSS. Residues 537-666 form the MPN domain; the sequence is IIVHGEVFQE…IFRLTDPPGL (130 aa). Zn(2+)-binding residues include histidine 615, histidine 617, aspartate 628, histidine 630, cysteine 672, histidine 678, and histidine 680. The JAMM motif motif lies at 615–628; the sequence is HTHPTQDCFLSAVD.

The protein belongs to the peptidase M67C family. It depends on Zn(2+) as a cofactor.

In terms of biological role, may be a zinc metalloprotease that specifically cleaves ubiquitin chains. This is Probable ubiquitin thioesterase DG1039 (DG1039) from Dictyostelium discoideum (Social amoeba).